The primary structure comprises 218 residues: Pyridoxine/pyridoxamine 5'-phosphate oxidase (218 aa).

Residues 12–15 (RLSY) and R70 each bind substrate. FMN-binding positions include 65–70 (RTVLLR), 80–81 (YT), K87, and Q109. Substrate is bound by residues Y127, R131, and S135. FMN is bound by residues 145 to 146 (QS) and W191. A substrate-binding site is contributed by 197–199 (RLH). Position 201 (R201) interacts with FMN.

This sequence belongs to the pyridoxamine 5'-phosphate oxidase family. In terms of assembly, homodimer. FMN serves as cofactor.

It catalyses the reaction pyridoxamine 5'-phosphate + O2 + H2O = pyridoxal 5'-phosphate + H2O2 + NH4(+). The catalysed reaction is pyridoxine 5'-phosphate + O2 = pyridoxal 5'-phosphate + H2O2. It participates in cofactor metabolism; pyridoxal 5'-phosphate salvage; pyridoxal 5'-phosphate from pyridoxamine 5'-phosphate: step 1/1. The protein operates within cofactor metabolism; pyridoxal 5'-phosphate salvage; pyridoxal 5'-phosphate from pyridoxine 5'-phosphate: step 1/1. Catalyzes the oxidation of either pyridoxine 5'-phosphate (PNP) or pyridoxamine 5'-phosphate (PMP) into pyridoxal 5'-phosphate (PLP). In Acinetobacter baumannii (strain SDF), this protein is Pyridoxine/pyridoxamine 5'-phosphate oxidase.